Reading from the N-terminus, the 406-residue chain is Putative competence-damage inducible protein (406 aa).

It belongs to the CinA family.

The sequence is that of Putative competence-damage inducible protein from Natranaerobius thermophilus (strain ATCC BAA-1301 / DSM 18059 / JW/NM-WN-LF).